Reading from the N-terminus, the 348-residue chain is (+)-germacrene D synthase (348 aa).

Mg(2+) contacts are provided by Asp-97, Asp-101, Asn-242, and Ser-246. Residues 97 to 101 carry the DDXXD motif motif; it reads DDILD.

The protein belongs to the terpene synthase family. It depends on Mg(2+) as a cofactor.

It catalyses the reaction (2E,6E)-farnesyl diphosphate = (+)-germacrene D + diphosphate. It participates in secondary metabolite biosynthesis; terpenoid biosynthesis. Its function is as follows. Sesquiterpene synthase converting farnesyl diphosphate to eight sesquiterpenes, with (+)-germacrene D and an unidentified oxygenated sesquiterpene as the major products. Has no diterpene synthase activity. This chain is (+)-germacrene D synthase, found in Selaginella moellendorffii (Spikemoss).